A 305-amino-acid chain; its full sequence is Homoserine O-acetyltransferase (305 aa).

Cysteine 132 serves as the catalytic Acyl-thioester intermediate. Substrate-binding residues include lysine 153 and serine 181. The Proton acceptor role is filled by histidine 221. Glutamate 223 is a catalytic residue. Position 235 (arginine 235) interacts with substrate.

The protein belongs to the MetA family.

The protein localises to the cytoplasm. It carries out the reaction L-homoserine + acetyl-CoA = O-acetyl-L-homoserine + CoA. It functions in the pathway amino-acid biosynthesis; L-methionine biosynthesis via de novo pathway; O-acetyl-L-homoserine from L-homoserine: step 1/1. Transfers an acetyl group from acetyl-CoA to L-homoserine, forming acetyl-L-homoserine. This Leuconostoc mesenteroides subsp. mesenteroides (strain ATCC 8293 / DSM 20343 / BCRC 11652 / CCM 1803 / JCM 6124 / NCDO 523 / NBRC 100496 / NCIMB 8023 / NCTC 12954 / NRRL B-1118 / 37Y) protein is Homoserine O-acetyltransferase.